The sequence spans 229 residues: Large ribosomal subunit protein uL1 (229 aa).

Belongs to the universal ribosomal protein uL1 family. As to quaternary structure, part of the 50S ribosomal subunit.

Binds directly to 23S rRNA. The L1 stalk is quite mobile in the ribosome, and is involved in E site tRNA release. In terms of biological role, protein L1 is also a translational repressor protein, it controls the translation of the L11 operon by binding to its mRNA. The polypeptide is Large ribosomal subunit protein uL1 (Ureaplasma urealyticum serovar 10 (strain ATCC 33699 / Western)).